The sequence spans 229 residues: Transmembrane 4 L6 family member 20 (229 aa).

Over Met1 to Ser14 the chain is Lumenal. The helical transmembrane segment at Leu15–Val35 threads the bilayer. Topologically, residues Glu36 to Pro44 are cytoplasmic. The helical transmembrane segment at Ile45–Ala65 threads the bilayer. At Thr66 to Gly83 the chain is on the lumenal side. The chain crosses the membrane as a helical span at residues Met84–Ile104. Residues Ser105–Arg185 are Cytoplasmic-facing. Residues Leu186–Gly206 traverse the membrane as a helical segment. Topologically, residues Leu207–Val229 are lumenal.

This sequence belongs to the L6 tetraspanin family. Glycosylated at Asn-132, Asn-148 and Asn-163 in presence of ceramide which inverts the orientation of TM4SF20 in membranes exposing these residues to the endoplasmic reticulum lumen. In terms of processing, cleaved by signal peptidase at Ser-14 but the peptide does not act as a signal peptide. Cleavage is inhibited by ceramide which inverts the orientation of TM4SF20 in membranes exposing the N-terminus to the cytosol and not to the endoplasmic reticulum lumen. In terms of tissue distribution, expressed in the brain, with high levels in the parietal lobe, hippocampus, pons, white matter and cerebellum.

The protein resides in the membrane. Its subcellular location is the endoplasmic reticulum membrane. Its function is as follows. Polytopic transmembrane protein that inhibits regulated intramembrane proteolysis (RIP) of CREB3L1, inhibiting its activation and the induction of collagen synthesis. In response to ceramide, which alters TM4SF20 membrane topology, stimulates RIP activation of CREB3L1. Ceramide reverses the direction through which transmembrane helices are translocated into the endoplasmic reticulum membrane during translation of TM4SF20, this mechanism is called 'regulated alternative translocation' (RAT) and regulates the function of the transmembrane protein. The polypeptide is Transmembrane 4 L6 family member 20 (TM4SF20) (Homo sapiens (Human)).